The primary structure comprises 445 residues: Glycine--tRNA ligase (445 aa).

Residues Arg97 and Glu145 each contribute to the substrate site. ATP is bound by residues Arg177–Glu179, Phe187–Phe192, Glu262–Val263, and Gly308–Arg311. Phe192–Glu196 contributes to the substrate binding site. Glu304–Gly308 contacts substrate.

Belongs to the class-II aminoacyl-tRNA synthetase family. In terms of assembly, homodimer.

The protein resides in the cytoplasm. It carries out the reaction tRNA(Gly) + glycine + ATP = glycyl-tRNA(Gly) + AMP + diphosphate. Functionally, catalyzes the attachment of glycine to tRNA(Gly). The chain is Glycine--tRNA ligase from Borreliella burgdorferi (strain ATCC 35210 / DSM 4680 / CIP 102532 / B31) (Borrelia burgdorferi).